A 533-amino-acid chain; its full sequence is Na(+)/H(+) antiporter NhaB (533 aa).

Helical transmembrane passes span 10–30 (IGNFLGNSPKWYKIAILSFLI), 67–87 (PGGLLAIQAVAIGMTSASQVL), 96–116 (VLLLLVFMVAGIYFMKQLLLF), 131–165 (VSLMFCLASAFLSAFLDALTVIAVIITVAVGFYSI), 209–229 (LLMHAGVGTALGGVCTMVGEP), 247–267 (IRMSPVTVPVLFAGILTCFLV), 310–330 (AFVGVWLIAGLALHLASVGLI), 355–375 (EEALPFTALLAVFFAVVAVII), 396–416 (LVIFYIANGLLSMVSDNVFVG), 454–474 (ATPNGQAAFLFLLTSALAPLI), and 481–501 (MVWMALPYTIVLSIVGVMAIE).

The protein belongs to the NhaB Na(+)/H(+) (TC 2.A.34) antiporter family.

The protein resides in the cell inner membrane. The catalysed reaction is 2 Na(+)(in) + 3 H(+)(out) = 2 Na(+)(out) + 3 H(+)(in). Na(+)/H(+) antiporter that extrudes sodium in exchange for external protons. The protein is Na(+)/H(+) antiporter NhaB of Shewanella sp. (strain MR-4).